A 251-amino-acid chain; its full sequence is Proteasome subunit alpha type-7 (251 aa).

The protein belongs to the peptidase T1A family. As to quaternary structure, the 26S proteasome consists of a 20S proteasome core and two 19S regulatory subunits. The 20S proteasome core is composed of 28 subunits that are arranged in four stacked rings, resulting in a barrel-shaped structure. The two end rings are each formed by seven alpha subunits, and the two central rings are each formed by seven beta subunits. The catalytic chamber with the active sites is on the inside of the barrel.

It is found in the cytoplasm. The protein resides in the nucleus. In terms of biological role, the proteasome is a multicatalytic proteinase complex which is characterized by its ability to cleave peptides with Arg, Phe, Tyr, Leu, and Glu adjacent to the leaving group at neutral or slightly basic pH. The proteasome has an ATP-dependent proteolytic activity. The sequence is that of Proteasome subunit alpha type-7 (psma7) from Carassius auratus (Goldfish).